The chain runs to 450 residues: Phosphoglucosamine mutase (450 aa).

Ser101 (phosphoserine intermediate) is an active-site residue. Mg(2+)-binding residues include Ser101, Asp240, Asp242, and Asp244. At Ser101 the chain carries Phosphoserine.

The protein belongs to the phosphohexose mutase family. Mg(2+) serves as cofactor. Post-translationally, activated by phosphorylation.

The catalysed reaction is alpha-D-glucosamine 1-phosphate = D-glucosamine 6-phosphate. Functionally, catalyzes the conversion of glucosamine-6-phosphate to glucosamine-1-phosphate. The sequence is that of Phosphoglucosamine mutase from Streptococcus gordonii (strain Challis / ATCC 35105 / BCRC 15272 / CH1 / DL1 / V288).